A 150-amino-acid chain; its full sequence is Transcriptional regulator MraZ (150 aa).

SpoVT-AbrB domains lie at 6-52 (EFFN…PYQE) and 80-126 (AVEC…NRTK).

The protein belongs to the MraZ family. As to quaternary structure, forms oligomers.

The protein resides in the cytoplasm. The protein localises to the nucleoid. This is Transcriptional regulator MraZ from Syntrophotalea carbinolica (strain DSM 2380 / NBRC 103641 / GraBd1) (Pelobacter carbinolicus).